We begin with the raw amino-acid sequence, 558 residues long: MLIDYPPTINFINFNQTGSCISIATDDGFSIYNCDPFGKFYSQKNYSIVEMLFSTSLLAVVGLGDQPALSQRRLTMINTKTYSIICEVTFPSAILSVKMNKSRLVVLLRDQIYIYDINNMRLLHTIETTSNKLGIISISSSPSPDHNMYLAYPSPPKFINSDIKSNLTTNNISIASSSSSQVEPPLNPQQRSNFSGNTLETIQDGKSYDGSNNSNNGNNNNNNNNNNNNNNNNNNNNNNNNNNSNNEENSNSKSFQQTGITGSSNSTIMKNGDVILFDLQTLQPTMVIEAHKGPIAALTLSFDGSLLATASEKGTIIRVFNVETGAKIYQFRRGTYPTEVYSLAFSKDNQFLAATSSSKTVHIFKLGKIMETSSDDNNNNTDDDSLNAGNIDSEIVTNLSSESLTESQSKDPHVDTSRSTVGRMIRKSSQQLSRQAAKKLGQIFPLKVASILESSRHFASFKLPTTGSGGGNSTGAGGQIKSISCFGEEIELDSSEYPELFNQGQDTTSNISQSKNPKLMKMQPIRIVSSDGNYYNYILDPERGGDCLLLSQYSILTN.

The stretch at 4–42 is one WD 1 repeat; that stretch reads DYPPTINFINFNQTGSCISIATDDGFSIYNCDPFGKFYS. The segment at 176-264 is disordered; it reads SSSSSQVEPP…FQQTGITGSS (89 aa). Over residues 188–201 the composition is skewed to polar residues; that stretch reads PQQRSNFSGNTLET. A compositionally biased stretch (low complexity) spans 210 to 252; that stretch reads GSNNSNNGNNNNNNNNNNNNNNNNNNNNNNNNNNSNNEENSNS. Over residues 253-264 the composition is skewed to polar residues; it reads KSFQQTGITGSS. WD repeat units follow at residues 290–330 and 335–374; these read AHKG…KIYQ and TYPT…ETSS. A L/FRRG motif motif is present at residues 331–335; sequence FRRGT. The disordered stretch occupies residues 400–432; it reads SSESLTESQSKDPHVDTSRSTVGRMIRKSSQQL.

This sequence belongs to the WD repeat PROPPIN family. As to quaternary structure, component of the PI(3,5)P2 regulatory complex.

Its subcellular location is the preautophagosomal structure membrane. The protein localises to the vacuole membrane. It is found in the endosome membrane. Functionally, the PI(3,5)P2 regulatory complex regulates both the synthesis and turnover of phosphatidylinositol 3,5-bisphosphate (PtdIns(3,5)P2). Necessary for proper vacuole morphology. Plays an important role in osmotically-induced vacuole fragmentation. Required for cytoplasm to vacuole transport (Cvt) vesicle formation, pexophagy and starvation-induced autophagy. Involved in correct ATG9 trafficking to the pre-autophagosomal structure. Might also be involved in premeiotic DNA replication. In Vanderwaltozyma polyspora (strain ATCC 22028 / DSM 70294 / BCRC 21397 / CBS 2163 / NBRC 10782 / NRRL Y-8283 / UCD 57-17) (Kluyveromyces polysporus), this protein is Autophagy-related protein 18 (ATG18).